Consider the following 353-residue polypeptide: S-adenosylmethionine:tRNA ribosyltransferase-isomerase (353 aa).

Belongs to the QueA family. As to quaternary structure, monomer.

Its subcellular location is the cytoplasm. It catalyses the reaction 7-aminomethyl-7-carbaguanosine(34) in tRNA + S-adenosyl-L-methionine = epoxyqueuosine(34) in tRNA + adenine + L-methionine + 2 H(+). Its pathway is tRNA modification; tRNA-queuosine biosynthesis. Its function is as follows. Transfers and isomerizes the ribose moiety from AdoMet to the 7-aminomethyl group of 7-deazaguanine (preQ1-tRNA) to give epoxyqueuosine (oQ-tRNA). The chain is S-adenosylmethionine:tRNA ribosyltransferase-isomerase from Rickettsia bellii (strain RML369-C).